The primary structure comprises 204 residues: Recombination protein RecR (204 aa).

The C4-type zinc finger occupies 63–78 (CRRCFNITVGELCAIC). The Toprim domain occupies 86–181 (TKICVVEEPL…RVTRPARGLP (96 aa)).

The protein belongs to the RecR family.

May play a role in DNA repair. It seems to be involved in an RecBC-independent recombinational process of DNA repair. It may act with RecF and RecO. This is Recombination protein RecR from Chloroflexus aurantiacus (strain ATCC 29366 / DSM 635 / J-10-fl).